Here is a 341-residue protein sequence, read N- to C-terminus: Hydrogenase expression/formation protein HupE (341 aa).

It belongs to the HypE family.

Functionally, may be involved in the maturation of the NifE hydrogenase. In Azotobacter chroococcum mcd 1, this protein is Hydrogenase expression/formation protein HupE (hupE).